Here is a 78-residue protein sequence, read N- to C-terminus: Small ribosomal subunit protein uS17 (78 aa).

The protein belongs to the universal ribosomal protein uS17 family. Part of the 30S ribosomal subunit.

One of the primary rRNA binding proteins, it binds specifically to the 5'-end of 16S ribosomal RNA. This chain is Small ribosomal subunit protein uS17, found in Allorhizobium ampelinum (strain ATCC BAA-846 / DSM 112012 / S4) (Agrobacterium vitis (strain S4)).